Consider the following 516-residue polypeptide: GMP synthase [glutamine-hydrolyzing] (516 aa).

Residues 8–198 (KILILDFGSQ…VVNICGCDTL (191 aa)) form the Glutamine amidotransferase type-1 domain. Catalysis depends on C84, which acts as the Nucleophile. Residues H172 and E174 contribute to the active site. The 193-residue stretch at 199 to 391 (WNIENIIEND…LGLPYNMLYR (193 aa)) folds into the GMPS ATP-PPase domain. 226–232 (SGGVDSS) serves as a coordination point for ATP.

As to quaternary structure, homodimer.

It carries out the reaction XMP + L-glutamine + ATP + H2O = GMP + L-glutamate + AMP + diphosphate + 2 H(+). The protein operates within purine metabolism; GMP biosynthesis; GMP from XMP (L-Gln route): step 1/1. Its function is as follows. Catalyzes the synthesis of GMP from XMP. The chain is GMP synthase [glutamine-hydrolyzing] from Francisella tularensis subsp. tularensis (strain WY96-3418).